The primary structure comprises 172 residues: Cytochrome b6-f complex iron-sulfur subunit (172 aa).

A helical membrane pass occupies residues 17–39; that stretch reads VFLNALLSSSVGVVVVGTLYPVV. The region spanning 61 to 161 is the Rieske domain; sequence GKPISVSELL…ATVDGDNVRF (101 aa). Cys-107, His-109, Cys-125, and His-128 together coordinate [2Fe-2S] cluster. A disulfide bond links Cys-112 and Cys-127.

This sequence belongs to the Rieske iron-sulfur protein family. In terms of assembly, the 4 large subunits of the cytochrome b6-f complex are cytochrome b6, subunit IV (17 kDa polypeptide, PetD), cytochrome f and the Rieske protein, while the 4 small subunits are PetG, PetL, PetM and PetN. The complex functions as a dimer. [2Fe-2S] cluster serves as cofactor.

It is found in the cellular thylakoid membrane. The enzyme catalyses 2 oxidized [plastocyanin] + a plastoquinol + 2 H(+)(in) = 2 reduced [plastocyanin] + a plastoquinone + 4 H(+)(out). In terms of biological role, component of the cytochrome b6-f complex, which mediates electron transfer between photosystem II (PSII) and photosystem I (PSI), cyclic electron flow around PSI, and state transitions. This chain is Cytochrome b6-f complex iron-sulfur subunit, found in Synechococcus sp. (strain JA-3-3Ab) (Cyanobacteria bacterium Yellowstone A-Prime).